The following is a 296-amino-acid chain: MTTVNLAAYRFVSLDSIEQWRPLITARCNALGLRGTILLAPEGINLFIAGSRGATDAFVDYLRHDPLFEGKFADLPFKESLSDSQPFRRMLVRLKREIITMKKPAIKPELGRAPSVDARMLKAWLDRGHDDAGRPVVMLDTRNAFEVDVGTFDNALDYRIDKFSQFPGVIEANRADLEGKTVVSFCTGGIRCEKAAIHMKDVGIENVYQLEGGILKYFEEVGGAHYHGDCFVFDYRTALNPQLAPTADVTCFACRAVVPADAQQSPLYVPGKSCPACHPGDQGRRADHRADPAHAA.

Residues 132-226 (AGRPVVMLDT…YFEEVGGAHY (95 aa)) enclose the Rhodanese domain. The Cysteine persulfide intermediate role is filled by C186.

It belongs to the TrhO family.

It carries out the reaction uridine(34) in tRNA + AH2 + O2 = 5-hydroxyuridine(34) in tRNA + A + H2O. Functionally, catalyzes oxygen-dependent 5-hydroxyuridine (ho5U) modification at position 34 in tRNAs. The protein is tRNA uridine(34) hydroxylase of Burkholderia thailandensis (strain ATCC 700388 / DSM 13276 / CCUG 48851 / CIP 106301 / E264).